The following is a 98-amino-acid chain: Major carboxysome shell protein CsoS1A (98 aa).

The 86-residue stretch at Ala8–Pro93 folds into the BMC domain.

This sequence belongs to the bacterial microcompartments protein family. CsoS1 subfamily. In terms of assembly, homohexamer with a small central pore; the concave side is mostly positive electrostatic potential, whereas the convex side is mostly negative electrostatic potential. Forms a CsoS2-CsoS1-RuBisCO complex. Interacts with the N-terminus (residues 1-136) of RuBisCO (CbbL).

Its subcellular location is the carboxysome. In terms of biological role, the major shell protein of the carboxysome, a polyhedral inclusion where RuBisCO (ribulose bisphosphate carboxylase, ccbL-ccbS) is sequestered. Assembles into hexamers which make sheets that form the facets of the polyhedral carboxysome. The shell probably limits the diffusion of CO(2) into and out of the carboxysome. Molecular modeling shows the central pore of this protein is selectively permeable to anions such as HCO(3) rather than CO(2) or O(2). There are estimated to be 2970 CsoS1A/CsoS1C proteins per carboxysome (the proteins differ by only 1 residue). Unlike beta-carboxysomes, alpha-carboxysomes (Cb) can form without cargo protein. CsoS2 is essential for Cb formation and is also capable of targeting foreign proteins to the Cb. The Cb shell assembles with the aid of CsoS2; CsoS1A, CsoS1B and CsoS1C form the majority of the shell while CsoS4A and CsoS4B form vertices. CsoS1D forms pseudohexamers that probably control metabolite flux into and out of the shell. This Halothiobacillus neapolitanus (strain ATCC 23641 / c2) (Thiobacillus neapolitanus) protein is Major carboxysome shell protein CsoS1A.